Consider the following 350-residue polypeptide: Uroporphyrinogen decarboxylase (350 aa).

Substrate contacts are provided by residues 28 to 32 (RQAGR), Phe47, Asp78, Tyr155, Ser210, and His325.

Belongs to the uroporphyrinogen decarboxylase family. As to quaternary structure, homodimer.

It is found in the cytoplasm. It catalyses the reaction uroporphyrinogen III + 4 H(+) = coproporphyrinogen III + 4 CO2. It functions in the pathway porphyrin-containing compound metabolism; protoporphyrin-IX biosynthesis; coproporphyrinogen-III from 5-aminolevulinate: step 4/4. In terms of biological role, catalyzes the decarboxylation of four acetate groups of uroporphyrinogen-III to yield coproporphyrinogen-III. In Synechocystis sp. (strain ATCC 27184 / PCC 6803 / Kazusa), this protein is Uroporphyrinogen decarboxylase.